A 351-amino-acid chain; its full sequence is Photosystem II D2 protein (351 aa).

A helical transmembrane segment spans residues 39–59; that stretch reads TAYLAAGGWMTGTTFVTSWYT. Residue histidine 116 participates in chlorophyll a binding. The helical transmembrane segment at 123 to 139 threads the bilayer; sequence GFCLRQFEIARLVGIRP. Pheophytin a contacts are provided by glutamine 128 and asparagine 141. A helical membrane pass occupies residues 151 to 164; sequence VFVSVFLLYPLGQA. A chlorophyll a-binding site is contributed by histidine 196. The chain crosses the membrane as a helical span at residues 206-226; that stretch reads GALLCAIHGATVENTLFEDGD. 2 residues coordinate a plastoquinone: histidine 213 and phenylalanine 260. Residue histidine 213 participates in Fe cation binding. Histidine 267 contributes to the Fe cation binding site. Residues 277–293 form a helical membrane-spanning segment; sequence GLWTSAIGIVGLALNLR.

It belongs to the reaction center PufL/M/PsbA/D family. As to quaternary structure, PSII is composed of 1 copy each of membrane proteins PsbA, PsbB, PsbC, PsbD, PsbE, PsbF, PsbH, PsbI, PsbJ, PsbK, PsbL, PsbM, PsbT, PsbX, PsbY, PsbZ, Psb30/Ycf12, at least 3 peripheral proteins of the oxygen-evolving complex and a large number of cofactors. It forms dimeric complexes. Requires The D1/D2 heterodimer binds P680, chlorophylls that are the primary electron donor of PSII, and subsequent electron acceptors. It shares a non-heme iron and each subunit binds pheophytin, quinone, additional chlorophylls, carotenoids and lipids. There is also a Cl(-1) ion associated with D1 and D2, which is required for oxygen evolution. The PSII complex binds additional chlorophylls, carotenoids and specific lipids. as cofactor.

Its subcellular location is the plastid. It is found in the chloroplast thylakoid membrane. The enzyme catalyses 2 a plastoquinone + 4 hnu + 2 H2O = 2 a plastoquinol + O2. Its function is as follows. Photosystem II (PSII) is a light-driven water:plastoquinone oxidoreductase that uses light energy to abstract electrons from H(2)O, generating O(2) and a proton gradient subsequently used for ATP formation. It consists of a core antenna complex that captures photons, and an electron transfer chain that converts photonic excitation into a charge separation. The D1/D2 (PsbA/PsbD) reaction center heterodimer binds P680, the primary electron donor of PSII as well as several subsequent electron acceptors. D2 is needed for assembly of a stable PSII complex. This Trieres chinensis (Marine centric diatom) protein is Photosystem II D2 protein.